Consider the following 568-residue polypeptide: MTLRLSRRAYAEMYGPTTGDRIRLADTELLIEVERDHTLYGEEVKFGGGKVIRDGMGQSQLPAADVADTVITNAVILDHWGIVKADIAIKHGRIAAIGKAGNPDIQPGVTIAIGAATEIIAGEGLIVTAGGIDTHIHFISPQQIDEALASGVTTMIGGGTGPATGTNATTCTPGPWHMERMLQAADGWPINLGFLGKGNASRPQPLVEQIEAGAIGLKLHEDWGTTPAAIDNCLTVADDTDTQVAIHTDTLNEAGFVEATVAAFKGRTIHTYHTEGAGGGHAPDILKVCGEANVLPSSTNPTRPYTINTLDEHLDMLMVCHHLDPSIAEDLAFAESRIRRETIAAEDILHDLGALSMLSSDSQAMGRVGEVIIRTWQTAHKMKVQRGALAGDGARNDNFRAKRYVAKYTINPALTHGIAHEVGSIEPGKWADLVLWEPAFFGVKPAMIVKGGMIAVAQMGDPNASIPTPQPVHYREMFATRGGALARTSLTFVSQLALDAGIGARYGLAKRLVPVRGCRTVTKRDMIHNAWQPAIRVDPETYDVVADGALLTCEPAAVLPMAQRYFLF.

The region spanning 130–568 (GGIDTHIHFI…LPMAQRYFLF (439 aa)) is the Urease domain. 3 residues coordinate Ni(2+): His-135, His-137, and Lys-218. Lys-218 carries the N6-carboxylysine modification. Substrate is bound at residue His-220. His-247 and His-273 together coordinate Ni(2+). The active-site Proton donor is the His-321. Asp-361 is a Ni(2+) binding site.

This sequence belongs to the metallo-dependent hydrolases superfamily. Urease alpha subunit family. In terms of assembly, heterotrimer of UreA (gamma), UreB (beta) and UreC (alpha) subunits. Three heterotrimers associate to form the active enzyme. Ni cation serves as cofactor. Post-translationally, carboxylation allows a single lysine to coordinate two nickel ions.

Its subcellular location is the cytoplasm. The enzyme catalyses urea + 2 H2O + H(+) = hydrogencarbonate + 2 NH4(+). Its pathway is nitrogen metabolism; urea degradation; CO(2) and NH(3) from urea (urease route): step 1/1. The sequence is that of Urease subunit alpha from Burkholderia mallei (strain NCTC 10247).